A 776-amino-acid chain; its full sequence is Photosystem I P700 chlorophyll a apoprotein A1 (776 aa).

Transmembrane regions (helical) follow at residues Ile76–Ala99, Leu162–His185, Leu201–Asn225, Val309–Tyr327, Trp368–Tyr391, Leu407–Ile433, Ala455–His477, and Leu557–Leu575. Residues Cys599 and Cys608 each coordinate [4Fe-4S] cluster. 2 consecutive transmembrane segments (helical) span residues His615–Trp636 and Leu690–Phe712. Residue His701 participates in divinylchlorophyll a' binding. Positions 709 and 717 each coordinate divinyl chlorophyll a. Phylloquinone is bound at residue Trp718. A helical transmembrane segment spans residues Ala750–Ala770.

Belongs to the PsaA/PsaB family. In terms of assembly, the PsaA/B heterodimer binds the P700 chlorophyll special pair and subsequent electron acceptors. PSI consists of a core antenna complex that captures photons, and an electron transfer chain that converts photonic excitation into a charge separation. The cyanobacterial PSI reaction center is composed of one copy each of PsaA,B,C,D,E,F,I,J,K,L,M and X, and forms trimeric complexes. It depends on PSI electron transfer chain: 5 divinyl chlorophyll a, 1 divinyl chlorophyll a', 2 phylloquinones and 3 4Fe-4S clusters. PSI core antenna: 90 divinyl chlorophyll a, 22 carotenoids, 3 phospholipids and 1 galactolipid. P700 is a divinyl chlorophyll a/divinyl chlorophyll a' dimer, A0 is one or more chlorophyll divinyl a, A1 is one or both phylloquinones and FX is a shared 4Fe-4S iron-sulfur center. as a cofactor.

It is found in the cellular thylakoid membrane. The enzyme catalyses reduced [plastocyanin] + hnu + oxidized [2Fe-2S]-[ferredoxin] = oxidized [plastocyanin] + reduced [2Fe-2S]-[ferredoxin]. PsaA and PsaB bind P700, the primary electron donor of photosystem I (PSI), as well as the electron acceptors A0, A1 and FX. PSI is a plastocyanin/cytochrome c6-ferredoxin oxidoreductase, converting photonic excitation into a charge separation, which transfers an electron from the donor P700 chlorophyll pair to the spectroscopically characterized acceptors A0, A1, FX, FA and FB in turn. Oxidized P700 is reduced on the lumenal side of the thylakoid membrane by plastocyanin or cytochrome c6. This chain is Photosystem I P700 chlorophyll a apoprotein A1, found in Prochlorococcus marinus (strain MIT 9313).